Consider the following 349-residue polypeptide: Interferon regulatory factor 2 (349 aa).

The IRF tryptophan pentad repeat DNA-binding region spans 5-113 (RMRMRPWLEE…NAFRVYRMLP (109 aa)). N6-acetyllysine occurs at positions 75 and 78. K137 is covalently cross-linked (Glycyl lysine isopeptide (Lys-Gly) (interchain with G-Cter in SUMO); alternate). K137 is covalently cross-linked (Glycyl lysine isopeptide (Lys-Gly) (interchain with G-Cter in SUMO2); alternate). A Glycyl lysine isopeptide (Lys-Gly) (interchain with G-Cter in SUMO) cross-link involves residue K166. The residue at position 225 (S225) is a Phosphoserine. Over residues 230-239 (YAESETTDSV) the composition is skewed to polar residues. A disordered region spans residues 230 to 253 (YAESETTDSVASDEENAEGRPHWR). Residue K260 forms a Glycyl lysine isopeptide (Lys-Gly) (interchain with G-Cter in SUMO2) linkage. K293 is covalently cross-linked (Glycyl lysine isopeptide (Lys-Gly) (interchain with G-Cter in SUMO)). The disordered stretch occupies residues 303 to 349 (SSWPPFTDLPLPAPVTPTPSSSRPDRETRASVIKKTSDITQARVKSC).

Belongs to the IRF family. In terms of assembly, interacts with BRD7, IRF2BP1 and IRF2BP2. Interacts with CREBBP in growing cells; the interaction acetylates IRF2 and regulates IRF2-dependent H4 promoter activity. In terms of processing, acetylated by CBP/ p300 during cell-growth. Acetylation on Lys-75 is required for stimulation of H4 promoter activity. The major sites of sumoylation are Lys-137 and Lys-293. Sumoylation with SUMO1 increases its transcriptional repressor activity on IRF1 and diminishes its ability to activate ISRE and H4 promoter.

The protein localises to the nucleus. Specifically binds to the upstream regulatory region of type I IFN and IFN-inducible MHC class I genes (the interferon consensus sequence (ICS)) and represses those genes. Also acts as an activator for several genes including H4 and IL7. Constitutively binds to the ISRE promoter to activate IL7. Involved in cell cycle regulation through binding the site II (HiNF-M) promoter region of H4 and activating transcription during cell growth. Antagonizes IRF1 transcriptional activation. The protein is Interferon regulatory factor 2 (Irf2) of Mus musculus (Mouse).